Consider the following 261-residue polypeptide: Bidirectional sugar transporter SWEET1b (261 aa).

The Extracellular segment spans residues 1 to 6 (MEDLAK). A helical membrane pass occupies residues 7–27 (FLFGVSGNVIALFLFLSPVPT). The MtN3/slv 1 domain occupies 7–95 (FLFGVSGNVI…VVFLVFASTH (89 aa)). Residues 28–42 (FWRIIRRKSTEDFSG) lie on the Cytoplasmic side of the membrane. Residues 43–63 (VPYNMTLINCLLSAWYGLPFV) form a helical membrane-spanning segment. At 64 to 71 (SPNNILVS) the chain is on the extracellular side. A helical transmembrane segment spans residues 72–92 (TINGAGAVIETAYVVVFLVFA). The Cytoplasmic portion of the chain corresponds to 93–101 (STHKTRLRT). Residues 102–122 (LGLAAAVASVFAAVALVSLLA) form a helical membrane-spanning segment. Over 123–129 (LHGQHRK) the chain is Extracellular. A helical membrane pass occupies residues 130–150 (LLCGVAATVCSICMYASPLSI). A MtN3/slv 2 domain is found at 133–215 (GVAATVCSIC…VLYAIYRNNK (83 aa)). Over 151-164 (MRLVIKTKSVEYMP) the chain is Cytoplasmic. The helical transmembrane segment at 165-185 (FLLSLAVFLCGTSWFIYGLLG) threads the bilayer. The Extracellular portion of the chain corresponds to 186-189 (RDPF). Residues 190-210 (VTIPNGCGSFLGAVQLVLYAI) traverse the membrane as a helical segment. The Cytoplasmic portion of the chain corresponds to 211–261 (YRNNKGAGGGSGGKQAGDDDVEMAEGRNNKVADGGAAEDDSTAGGKAGTEV). Positions 218 to 261 (GGGSGGKQAGDDDVEMAEGRNNKVADGGAAEDDSTAGGKAGTEV) are disordered.

This sequence belongs to the SWEET sugar transporter family. Forms homodimers.

Its subcellular location is the cell membrane. It catalyses the reaction D-glucose(out) = D-glucose(in). The catalysed reaction is D-galactose(in) = D-galactose(out). Its function is as follows. Mediates transport of sugars across the plasma membrane. Can transport glucose and galactose, but not fructose, mannose and sucrose. The protein is Bidirectional sugar transporter SWEET1b (SWEET1B) of Oryza sativa subsp. indica (Rice).